Reading from the N-terminus, the 507-residue chain is Prolyl carboxy peptidase like protein 5 (507 aa).

Positions 1–16 (MNIFISLAILIATTHC) are cleaved as a signal peptide. A glycan (N-linked (GlcNAc...) asparagine) is linked at asparagine 125. Serine 172 functions as the Charge relay system in the catalytic mechanism. Residues asparagine 332 and asparagine 407 are each glycosylated (N-linked (GlcNAc...) asparagine). Residues aspartate 439 and histidine 466 each act as charge relay system in the active site.

It belongs to the peptidase S28 family.

The protein is Prolyl carboxy peptidase like protein 5 of Caenorhabditis elegans.